We begin with the raw amino-acid sequence, 188 residues long: Ribosomal RNA small subunit methyltransferase G (188 aa).

S-adenosyl-L-methionine is bound by residues glycine 69, phenylalanine 74, 119–120 (VQ), and arginine 134.

The protein belongs to the methyltransferase superfamily. RNA methyltransferase RsmG family.

The protein resides in the cytoplasm. It carries out the reaction guanosine(527) in 16S rRNA + S-adenosyl-L-methionine = N(7)-methylguanosine(527) in 16S rRNA + S-adenosyl-L-homocysteine. Its function is as follows. Specifically methylates the N7 position of guanine in position 527 of 16S rRNA. The protein is Ribosomal RNA small subunit methyltransferase G of Campylobacter jejuni (strain RM1221).